A 417-amino-acid polypeptide reads, in one-letter code: C4-dicarboxylate transport protein (417 aa).

8 consecutive transmembrane segments (helical) span residues 4–26, 41–60, 72–94, 137–159, 180–202, 217–239, 285–307, and 347–369; these read IYVQ…PQIG, KLVI…ARMG, ALIY…GRLI, FIGA…TGFA, LFFG…AMGF, ALVA…GIAW, VVGL…YMTL, and FITL…AILV.

The protein belongs to the dicarboxylate/amino acid:cation symporter (DAACS) (TC 2.A.23) family.

The protein resides in the cell inner membrane. Responsible for the transport of dicarboxylates such as succinate, fumarate, and malate from the periplasm across the membrane. In Caulobacter vibrioides (strain ATCC 19089 / CIP 103742 / CB 15) (Caulobacter crescentus), this protein is C4-dicarboxylate transport protein.